The primary structure comprises 394 residues: Putative agmatinase 1 (394 aa).

Positions 1 to 20 (MALQSLFLILLAGAAQLAQA) are cleaved as a signal peptide. His-186, Asp-209, His-211, Asp-213, Asp-307, and Asp-309 together coordinate Mn(2+).

The protein belongs to the arginase family. It depends on Mn(2+) as a cofactor.

It carries out the reaction agmatine + H2O = urea + putrescine. This Schizosaccharomyces pombe (strain 972 / ATCC 24843) (Fission yeast) protein is Putative agmatinase 1.